The primary structure comprises 130 residues: Large ribosomal subunit protein bL12 (130 aa).

This sequence belongs to the bacterial ribosomal protein bL12 family. Homodimer. Part of the ribosomal stalk of the 50S ribosomal subunit. Forms a multimeric L10(L12)X complex, where L10 forms an elongated spine to which 2 to 4 L12 dimers bind in a sequential fashion. Binds GTP-bound translation factors.

Its function is as follows. Forms part of the ribosomal stalk which helps the ribosome interact with GTP-bound translation factors. Is thus essential for accurate translation. This is Large ribosomal subunit protein bL12 from Synechococcus sp. (strain WH7803).